The chain runs to 87 residues: Small ribosomal subunit protein bS18 (87 aa).

This sequence belongs to the bacterial ribosomal protein bS18 family. In terms of assembly, part of the 30S ribosomal subunit. Forms a tight heterodimer with protein bS6.

In terms of biological role, binds as a heterodimer with protein bS6 to the central domain of the 16S rRNA, where it helps stabilize the platform of the 30S subunit. The chain is Small ribosomal subunit protein bS18 from Sulfurovum sp. (strain NBC37-1).